Consider the following 691-residue polypeptide: Glycine--tRNA ligase beta subunit (691 aa).

It belongs to the class-II aminoacyl-tRNA synthetase family. In terms of assembly, tetramer of two alpha and two beta subunits.

It is found in the cytoplasm. The enzyme catalyses tRNA(Gly) + glycine + ATP = glycyl-tRNA(Gly) + AMP + diphosphate. This chain is Glycine--tRNA ligase beta subunit, found in Levilactobacillus brevis (strain ATCC 367 / BCRC 12310 / CIP 105137 / JCM 1170 / LMG 11437 / NCIMB 947 / NCTC 947) (Lactobacillus brevis).